The sequence spans 126 residues: Small ribosomal subunit protein uS11 (126 aa).

The protein belongs to the universal ribosomal protein uS11 family. Part of the 30S ribosomal subunit. Interacts with proteins S7 and S18. Binds to IF-3.

Located on the platform of the 30S subunit, it bridges several disparate RNA helices of the 16S rRNA. Forms part of the Shine-Dalgarno cleft in the 70S ribosome. The chain is Small ribosomal subunit protein uS11 from Treponema pallidum (strain Nichols).